Here is a 238-residue protein sequence, read N- to C-terminus: Metal-independent phosphoserine phosphatase (238 aa).

Catalysis depends on histidine 32, which acts as the Tele-phosphohistidine intermediate. The active-site Proton donor/acceptor is the glutamate 107.

Belongs to the phosphoglycerate mutase family.

The enzyme catalyses O-phospho-L-serine + H2O = L-serine + phosphate. It carries out the reaction O-phospho-D-serine + H2O = D-serine + phosphate. Functionally, phosphoglycerate mutase-like protein lacking PGM activity, but having a low metal-independent phosphoserine phosphatase activity in vitro. May be involved in serine biosynthesis. In Arabidopsis thaliana (Mouse-ear cress), this protein is Metal-independent phosphoserine phosphatase (IPSP).